Consider the following 565-residue polypeptide: NAD-dependent malic enzyme (565 aa).

Tyr-104 acts as the Proton donor in catalysis. Arg-157 serves as a coordination point for NAD(+). Residue Lys-175 is the Proton acceptor of the active site. Residues Glu-246, Asp-247, and Asp-270 each contribute to the a divalent metal cation site. The NAD(+) site is built by Asp-270 and Asn-418.

Belongs to the malic enzymes family. Homotetramer. The cofactor is Mg(2+). It depends on Mn(2+) as a cofactor.

It carries out the reaction (S)-malate + NAD(+) = pyruvate + CO2 + NADH. The catalysed reaction is oxaloacetate + H(+) = pyruvate + CO2. The protein is NAD-dependent malic enzyme of Salmonella agona (strain SL483).